The following is an 84-amino-acid chain: uncharacterized protein (84 aa).

One can recognise a 2Fe-2S ferredoxin-type domain in the interval alanine 2–methionine 84. [2Fe-2S] cluster contacts are provided by cysteine 37, cysteine 42, cysteine 45, and cysteine 74.

Requires [2Fe-2S] cluster as cofactor.

This is an uncharacterized protein from Escherichia coli O6:H1 (strain CFT073 / ATCC 700928 / UPEC).